Here is a 517-residue protein sequence, read N- to C-terminus: Xyloglucan galactosyltransferase XLT2 (517 aa).

Residues 1–31 (MLPVSNPSSPEHLLKKSRTPDSTTSIDRKNS) are disordered. The Cytoplasmic segment spans residues 1-49 (MLPVSNPSSPEHLLKKSRTPDSTTSIDRKNSFNSLHSVGNRSSYIAASR). The segment covering 20-31 (PDSTTSIDRKNS) has biased composition (polar residues). A helical; Signal-anchor for type II membrane protein membrane pass occupies residues 50–70 (SHCTWLILSLLSLQLILFLTL). The Lumenal segment spans residues 71–517 (RSIPFPHRHI…KEQEKWYKWR (447 aa)). N-linked (GlcNAc...) asparagine glycans are attached at residues Asn250, Asn288, Asn377, and Asn449.

It belongs to the glycosyltransferase 47 family. In terms of assembly, interacts with CSLC4, FUT1, XXT2 and XXT5. As to expression, expressed in roots, hypocotyls, cotyledons, leaves, stems and flowers.

Its subcellular location is the golgi apparatus membrane. Functions in xyloglucan synthesis by adding side chains to the xylosylated glucan backbone. Involved in galactosylating hemicellulose xyloglucan (XyG) at the second position of the XXXG motif to form XLXG. Associates with other xyloglucan-synthesizing enzymes to form multiprotein complexes for xyloglucan synthesis in the Golgi. This chain is Xyloglucan galactosyltransferase XLT2, found in Arabidopsis thaliana (Mouse-ear cress).